We begin with the raw amino-acid sequence, 220 residues long: Outer membrane protein assembly factor BamD (220 aa).

The signal sequence occupies residues 1–22; it reads MRLKHFKTFLFITMAIIVIGTG. A lipid anchor (N-palmitoyl cysteine) is attached at cysteine 23. A lipid anchor (S-diacylglycerol cysteine) is attached at cysteine 23.

Belongs to the BamD family. Part of the Bam complex.

The protein localises to the cell outer membrane. In terms of biological role, part of the outer membrane protein assembly complex, which is involved in assembly and insertion of beta-barrel proteins into the outer membrane. The sequence is that of Outer membrane protein assembly factor BamD from Helicobacter pylori (strain ATCC 700392 / 26695) (Campylobacter pylori).